An 82-amino-acid polypeptide reads, in one-letter code: uncharacterized protein (82 aa).

Helical transmembrane passes span 32–52 (PFSIALDLVSGTMVGLLIGIL) and 59–79 (SKPLFLIIFTIIGMIAGFNII).

Its subcellular location is the cell membrane. This is an uncharacterized protein from Rickettsia prowazekii (strain Madrid E).